Here is an 84-residue protein sequence, read N- to C-terminus: MAKSNKRRPAPEKPVKTRKCVFCSKKGQDIDYKDTALLRTYISERGKIRARRVTGNCVQHQRDIAVAVKNAREVALLPFGSSTR.

This sequence belongs to the bacterial ribosomal protein bS18 family. Part of the 30S ribosomal subunit. Forms a tight heterodimer with protein bS6.

In terms of biological role, binds as a heterodimer with protein bS6 to the central domain of the 16S rRNA, where it helps stabilize the platform of the 30S subunit. The protein is Small ribosomal subunit protein bS18 of Mycobacterium sp. (strain JLS).